A 90-amino-acid polypeptide reads, in one-letter code: Conotoxin Ca8.2 (90 aa).

The signal sequence occupies residues 1-21; that stretch reads MMLKMGAMFVLLLLFILPSSQ. Residues 22–46 constitute a propeptide that is removed on maturation; that stretch reads QEGDVQARKTHLKRGFYGTLAMSTR. The residue at position 89 (glutamine 89) is a Glutamine amide.

It belongs to the conotoxin S superfamily. In terms of processing, contains 5 disulfide bonds. As to expression, expressed by the venom duct.

It is found in the secreted. The sequence is that of Conotoxin Ca8.2 from Conus caracteristicus (Characteristic cone).